The chain runs to 1250 residues: Probable autotransporter YfaL (1250 aa).

An N-terminal signal peptide occupies residues 1–28; that stretch reads MRIIFLRKEYLSLLPSMIASLFSANGVA. A disordered region spans residues 914–951; sequence RSQEVTPPSPPDPDPTPDPDPTPDPDPTPDPEPTPAYQ. Repeat 1 spans residues 919–920; sequence TP. Residues 919-948 are 15 X 2 AA approximate tandem repeats of [DTPE]-P; that stretch reads TPPSPPDPDPTPDPDPTPDPDPTPDPEPTP. The stretch at 921–922 is one 2; approximate repeat; the sequence is PS. Residues 923-924 form repeat 3; the sequence is PP. A 4; approximate repeat occupies 925–926; it reads DP. A run of 11 repeats spans residues 927-928, 929-930, 931-932, 933-934, 935-936, 937-938, 939-940, 941-942, 943-944, 945-946, and 947-948. Residues 928–942 are compositionally biased toward acidic residues; it reads PTPDPDPTPDPDPTP. In terms of domain architecture, Autotransporter spans 980–1250; it reads AGGDGQTLNL…AGFLSMTVKW (271 aa).

In terms of processing, an approximately 170 kDa protein is detected in the outer membrane, while a C-terminal 55 kDa fragment is detected in whole cells. The full-length putative autotransporter may be cleaved to release the mature protein from the outer membrane; Pefabloc SC, a Ser-Thr protease inhibitor prevents the appearance of the 55 kDa C--terminal fragment.

It localises to the periplasm. It is found in the secreted. Its subcellular location is the cell surface. The protein localises to the cell outer membrane. Its function is as follows. Probably an autotransporter. Upon overexpression shows increased adherence to polyvinyl chloride (PVC) plates, increased mature biofilm formation. This is Probable autotransporter YfaL (yfaL) from Escherichia coli (strain K12).